The sequence spans 668 residues: Beta-galactosidase (668 aa).

The first 24 residues, Met-1 to Gly-24, serve as a signal peptide directing secretion. Positions Leu-25 to Ser-29 are excised as a propeptide. 3 residues coordinate substrate: Tyr-84, Glu-130, and Asn-188. The active-site Proton donor is Glu-189. An intrachain disulfide couples Cys-196 to Cys-231. Asn-248 is a glycosylation site (N-linked (GlcNAc...) asparagine). Residue Glu-269 is the Nucleophile of the active site. Tyr-334 lines the substrate pocket. N-linked (GlcNAc...) asparagine glycosylation is found at Asn-465, Asn-499, Asn-546, and Asn-556. Cys-627 and Cys-635 are disulfide-bonded.

Belongs to the glycosyl hydrolase 35 family. As to quaternary structure, homodimer. May form higher multimers.

Its subcellular location is the lysosome. The enzyme catalyses Hydrolysis of terminal non-reducing beta-D-galactose residues in beta-D-galactosides.. Its function is as follows. Cleaves beta-linked terminal galactosyl residues from gangliosides, glycoproteins, and glycosaminoglycans. In Canis lupus familiaris (Dog), this protein is Beta-galactosidase (GLB1).